The following is a 146-amino-acid chain: Large ribosomal subunit protein uL15 (146 aa).

Positions 1–18 (MKLHELKPAEGSRKERNR) are enriched in basic and acidic residues. The tract at residues 1–54 (MKLHELKPAEGSRKERNRVGRGVATGNGKTSGRGHKGQKARSGGGVRPGFEGGQ) is disordered. Positions 42 to 52 (SGGGVRPGFEG) are enriched in gly residues.

This sequence belongs to the universal ribosomal protein uL15 family. Part of the 50S ribosomal subunit.

Functionally, binds to the 23S rRNA. In Staphylococcus aureus (strain Mu3 / ATCC 700698), this protein is Large ribosomal subunit protein uL15.